The sequence spans 515 residues: Bifunctional purine biosynthesis protein PurH (515 aa).

The MGS-like domain occupies 1–145; sequence MTKRALISVS…KNHASVTVVV (145 aa).

The protein belongs to the PurH family.

It carries out the reaction (6R)-10-formyltetrahydrofolate + 5-amino-1-(5-phospho-beta-D-ribosyl)imidazole-4-carboxamide = 5-formamido-1-(5-phospho-D-ribosyl)imidazole-4-carboxamide + (6S)-5,6,7,8-tetrahydrofolate. The catalysed reaction is IMP + H2O = 5-formamido-1-(5-phospho-D-ribosyl)imidazole-4-carboxamide. The protein operates within purine metabolism; IMP biosynthesis via de novo pathway; 5-formamido-1-(5-phospho-D-ribosyl)imidazole-4-carboxamide from 5-amino-1-(5-phospho-D-ribosyl)imidazole-4-carboxamide (10-formyl THF route): step 1/1. Its pathway is purine metabolism; IMP biosynthesis via de novo pathway; IMP from 5-formamido-1-(5-phospho-D-ribosyl)imidazole-4-carboxamide: step 1/1. This chain is Bifunctional purine biosynthesis protein PurH, found in Streptococcus uberis (strain ATCC BAA-854 / 0140J).